Consider the following 1077-residue polypeptide: Teashirt homolog 1 (1077 aa).

Disordered regions lie at residues 1–109, 139–195, and 269–298; these read MPRR…VSYP, SGST…SSSS, and GHYRDDNRDKDSEKTKRWSKPRKRSLMEME. Residues 26 to 36 are compositionally biased toward acidic residues; it reads IDEEHVEDDGL. Composition is skewed to polar residues over residues 57–71 and 139–152; these read QSYQNSPVSSATNQD and SGSTTSTNDASQKE. Residues 164 to 195 are compositionally biased toward low complexity; that stretch reads PVSTTGPTTSTPSTSCSSSTSHSSTTSTSSSS. 2 C2H2-type zinc fingers span residues 246–270 and 307–331; these read FRCKDCSAAYDTLVELTVHMNETGH and LKCMYCGHSFESLQDLSVHMIKTKH. Over residues 269–284 the composition is skewed to basic and acidic residues; that stretch reads GHYRDDNRDKDSEKTK. Residues 416-440 form a C2H2-type 3; atypical zinc finger; that stretch reads LKCMECGSSHDTLQQLTAHMMVTGH. 2 disordered regions span residues 467-549 and 647-720; these read SIPL…KGGL and TGKV…EPLK. Composition is skewed to basic and acidic residues over residues 496–528, 647–665, and 675–708; these read SEEKKEPEKEKPPVAGDAEKIKEESEDSLEKFE, TGKVNIKKEERPPEKEKSS, and KENKDFPKTEEVSGKPQKKGPEAETGKAKKEGPL. S765 is modified (phosphoserine). Residues 848–873 are disordered; it reads TGRLTPKSSTPSTVSEKSDADGSSFE. Residues 853-862 are compositionally biased toward polar residues; the sequence is PKSSTPSTVS. The segment at residues 885–955 is a DNA-binding region (homeobox; atypical); sequence RKGRQSNWNP…NVKYQLRRTG (71 aa). 2 consecutive C2H2-type zinc fingers follow at residues 970-992 and 1037-1060; these read FFCNDCASQFRTASTYISHLETH and FQCKLCNRTFASKHAVKLHLSKTH.

The protein belongs to the teashirt C2H2-type zinc-finger protein family. Interacts (via homeobox domain) with APBB1 (via PID domain 1). As to expression, expressed in brain; strongly reduced in post-mortem elderly subjects with Alzheimer disease.

The protein localises to the nucleus. Functionally, probable transcriptional regulator involved in developmental processes. May act as a transcriptional repressor (Potential). The protein is Teashirt homolog 1 (TSHZ1) of Homo sapiens (Human).